The following is a 187-amino-acid chain: uncharacterized protein (187 aa).

Residues 42–63 (RTNGPGKDSFSFSTSGSKPSSS) form a disordered region. Residues 50-63 (SFSFSTSGSKPSSS) are compositionally biased toward low complexity.

This is an uncharacterized protein from Saccharomyces cerevisiae (strain ATCC 204508 / S288c) (Baker's yeast).